The following is a 434-amino-acid chain: Forkhead box protein A2 (434 aa).

Residues lysine 149 to lysine 243 constitute a DNA-binding region (fork-head). Over residues lysine 249–serine 262 the composition is skewed to basic and acidic residues. The tract at residues lysine 249–leucine 339 is disordered. Low complexity-rich tracts occupy residues glutamate 263–proline 291 and alanine 317–histidine 333.

Its subcellular location is the nucleus. Functionally, acts as a transcriptional activator during early development, limiting the extent of mesoderm formation in the gastrula. Binds to DNA via the target sequence 5'-GT[AC]AACA-3', with 5'-GTAAACA-3' being the preferred binding site. This is Forkhead box protein A2 from Xenopus tropicalis (Western clawed frog).